A 340-amino-acid polypeptide reads, in one-letter code: UDP-N-acetylenolpyruvoylglucosamine reductase (340 aa).

The FAD-binding PCMH-type domain maps to 14 to 185 (HVEATARWLL…VAVEFNLPLL (172 aa)). Residue Arg-162 is part of the active site. Ser-235 functions as the Proton donor in the catalytic mechanism. Glu-332 is a catalytic residue.

This sequence belongs to the MurB family. FAD is required as a cofactor.

It is found in the cytoplasm. The enzyme catalyses UDP-N-acetyl-alpha-D-muramate + NADP(+) = UDP-N-acetyl-3-O-(1-carboxyvinyl)-alpha-D-glucosamine + NADPH + H(+). Its pathway is cell wall biogenesis; peptidoglycan biosynthesis. Cell wall formation. The chain is UDP-N-acetylenolpyruvoylglucosamine reductase from Xanthomonas oryzae pv. oryzae (strain KACC10331 / KXO85).